A 192-amino-acid polypeptide reads, in one-letter code: Peptidyl-tRNA hydrolase (192 aa).

A tRNA-binding site is contributed by tyrosine 14. Catalysis depends on histidine 19, which acts as the Proton acceptor. Residues tyrosine 64, asparagine 66, and asparagine 112 each contribute to the tRNA site.

This sequence belongs to the PTH family. As to quaternary structure, monomer.

It is found in the cytoplasm. The enzyme catalyses an N-acyl-L-alpha-aminoacyl-tRNA + H2O = an N-acyl-L-amino acid + a tRNA + H(+). Functionally, hydrolyzes ribosome-free peptidyl-tRNAs (with 1 or more amino acids incorporated), which drop off the ribosome during protein synthesis, or as a result of ribosome stalling. Catalyzes the release of premature peptidyl moieties from peptidyl-tRNA molecules trapped in stalled 50S ribosomal subunits, and thus maintains levels of free tRNAs and 50S ribosomes. The sequence is that of Peptidyl-tRNA hydrolase from Prosthecochloris aestuarii (strain DSM 271 / SK 413).